Here is a 388-residue protein sequence, read N- to C-terminus: Lipid-A-disaccharide synthase (388 aa).

Belongs to the LpxB family.

The enzyme catalyses a lipid X + a UDP-2-N,3-O-bis[(3R)-3-hydroxyacyl]-alpha-D-glucosamine = a lipid A disaccharide + UDP + H(+). Its pathway is bacterial outer membrane biogenesis; LPS lipid A biosynthesis. Its function is as follows. Condensation of UDP-2,3-diacylglucosamine and 2,3-diacylglucosamine-1-phosphate to form lipid A disaccharide, a precursor of lipid A, a phosphorylated glycolipid that anchors the lipopolysaccharide to the outer membrane of the cell. The polypeptide is Lipid-A-disaccharide synthase (Sulfurihydrogenibium sp. (strain YO3AOP1)).